Consider the following 1254-residue polypeptide: MGSSDVSSRECSLVYNEDPDFTDGTTPCDRLGVDLMNVLDDKDEIKQESVPVSDREIEDTESDASAVSSFASANELIAEPHAASETNLGTNGQDGRNVLEQQRDVVARLIEENKETQKEGDKVCIVPKVWYDKFFDPDVTDPEDIGPINTRMICRDFENFVLEDYNRCPYLSIAEPVFNFLSEIYGMTSGSYPVVTNLVINQTTGELETEYNKWFFRLHYLTEKQDGRKRRHGQDDSIMYLSMSALNLVRDLVEKSMNLFFEKADHLDVNAVDFKIWFVSEGSDIATDSNVSTFLNSSYEITPLQFLELPIKKLLIPDMFENRLDKITSNPSDLVIEIKPIEGNHHWPSNYFAYNKLEPASGTTGLVNLGNTCYMNSALQCLVHIPQLRDYFLYDGYEDEINEENPLGYHGYVARAFSDLVQKLFQNRMSIMQRNAAFPPSMFKSTIGHFNSMFSGYMQQDSQEFLAFLLDSLHEDLNRIIKKEYTEKPSLSPGDDVNDWNVVKKLADDTWEMHLKRNCSVITDLFVGMYKSTLYCPECQNVSITFDPYNDVTLPLPVDTVWDKTIKIFPMNSPPLLLEVELSKSSTYMDLKNYVGKMSGLDPNTLFGCEIFSNQIYVNYESTESNAQFLTLQELIKPADDVIFYELPVTNDNEVIVPVLNTRIEKGYKNAMLFGVPFFITLKEDELNNPGAIRMKLQNRFVHLSGGYIPFPEPVGNRTDFADAFPLLVEKYPDVEFEQYKDILQYTSIKVTDKDKSFFSIKILSVEKEQQFASNNRTGPNFWTPISQLNLDKATDIDDKLEDVVKDIYNYSSLVDCAEGVLMQVDDEGDTEGSEAKNFSKPFQSGDDEENKETVTNNENVNNTNDRDEDMELTDDVEEDASTEPELTDKPEALDKIKDSLTSTPFAILSMNDIIVCEWSELGSNEAFSDDKIYNWENPATLPNKELENAKLERSNAKERTITLDDCLQLFSKPEILGLTDSWYCPTCKEHRQATKQIQLWNTPDILLIHLKRFESQRSFSDKIDATVNFPITDLDLSRYVVYKDDPRGLIYDLYAVDNHYGGLGGGHYTAYVKNFADNKWYYFDDSRVTETAPENSIAGSAYLLFYIRRHKDGNGLGSSKLQEIIQKSRHGYDERIKKIYDEQMKLYEFNKTDEEEDVSDDMIECNEDVQAPEYSNRSLEVGHIETQDCNDEDDNDDGERTNSGRRKLRLLKKVYKNNSGLGSSSTSEISEGCPENEVADLNLKNGVTLESPE.

Ser-84 is modified (phosphoserine). Residues 97–199 (NVLEQQRDVV…GSYPVVTNLV (103 aa)) enclose the DUSP domain. A USP domain is found at 364-1110 (TGLVNLGNTC…SAYLLFYIRR (747 aa)). Residue Cys-373 is the Nucleophile of the active site. The disordered stretch occupies residues 827 to 893 (DEGDTEGSEA…EPELTDKPEA (67 aa)). Over residues 854–864 (TVTNNENVNNT) the composition is skewed to low complexity. Residues 867–883 (RDEDMELTDDVEEDAST) are compositionally biased toward acidic residues. The active-site Proton acceptor is His-1068. Ser-1160 is subject to Phosphoserine. The disordered stretch occupies residues 1188-1207 (QDCNDEDDNDDGERTNSGRR). The span at 1189–1198 (DCNDEDDNDD) shows a compositional bias: acidic residues.

Belongs to the peptidase C19 family. In terms of assembly, interacts with FZO1.

The catalysed reaction is Thiol-dependent hydrolysis of ester, thioester, amide, peptide and isopeptide bonds formed by the C-terminal Gly of ubiquitin (a 76-residue protein attached to proteins as an intracellular targeting signal).. Its function is as follows. Ubiquitin carboxyl-terminal hydrolase that recognizes ubiquitin chains that stabilize FZO1 and promote mitochondrial fusion. UBP12 deubiquitylates FZO1 only after oligomerization. In Saccharomyces cerevisiae (strain ATCC 204508 / S288c) (Baker's yeast), this protein is Ubiquitin carboxyl-terminal hydrolase 12 (UBP12).